Consider the following 383-residue polypeptide: MQTWQLPEHIADVLPTNARQLESAREQLLALFRVHGYELVQPPLMEYAHSLLTHIDAGLSLKTILVTDRLSGRQLGIRADITPQVARIDAHLLSANQGINRLCYAGPVLHAQPDGLLNMREPLQAGAEMYGFADIRGDIELIDLMLKSMKIADMGKVLLSLGHIGIFRALSDAAHLDAGQSATLLALMQDKDTGTVEAQVKAWKLDGMWAKAFSLLPRLYGGREVLSDARGRLPDLSAVGGALDELQAVCDAFPDCEIHIDLSELRVDNYHTGLLYAAYAADFHDAVARGGRYDGLGGYFGRARPATGFSFDLRSFIGRLPTSERQPAVLVDAEDAEAAREAVEALREQGQCVVIDYGIGHNVSEELAGRLKKTDGVWQVVKR.

It belongs to the class-II aminoacyl-tRNA synthetase family. HisZ subfamily. Heteromultimer composed of HisG and HisZ subunits.

The protein localises to the cytoplasm. It participates in amino-acid biosynthesis; L-histidine biosynthesis; L-histidine from 5-phospho-alpha-D-ribose 1-diphosphate: step 1/9. In terms of biological role, required for the first step of histidine biosynthesis. May allow the feedback regulation of ATP phosphoribosyltransferase activity by histidine. The protein is ATP phosphoribosyltransferase regulatory subunit of Neisseria meningitidis serogroup C / serotype 2a (strain ATCC 700532 / DSM 15464 / FAM18).